The primary structure comprises 228 residues: Ribose-5-phosphate isomerase A (228 aa).

Residues 29-32, 84-87, and 97-100 contribute to the substrate site; these read TGST, DGAD, and KGGG. The active-site Proton acceptor is E106. K124 is a substrate binding site.

The protein belongs to the ribose 5-phosphate isomerase family. Homodimer.

The enzyme catalyses aldehydo-D-ribose 5-phosphate = D-ribulose 5-phosphate. Its pathway is carbohydrate degradation; pentose phosphate pathway; D-ribose 5-phosphate from D-ribulose 5-phosphate (non-oxidative stage): step 1/1. Its function is as follows. Catalyzes the reversible conversion of ribose-5-phosphate to ribulose 5-phosphate. This is Ribose-5-phosphate isomerase A from Sphingopyxis alaskensis (strain DSM 13593 / LMG 18877 / RB2256) (Sphingomonas alaskensis).